The sequence spans 1154 residues: DNA-directed RNA polymerase subunit beta (1154 aa).

Over residues 1108–1123 (ELGIDIQGEDRSERAG) the composition is skewed to basic and acidic residues. The disordered stretch occupies residues 1108–1136 (ELGIDIQGEDRSERAGEPASPDEMDDEEE). Residues 1127-1136 (SPDEMDDEEE) show a composition bias toward acidic residues.

Belongs to the RNA polymerase beta chain family. As to quaternary structure, the RNAP catalytic core consists of 2 alpha, 1 beta, 1 beta' and 1 omega subunit. When a sigma factor is associated with the core the holoenzyme is formed, which can initiate transcription.

The enzyme catalyses RNA(n) + a ribonucleoside 5'-triphosphate = RNA(n+1) + diphosphate. Functionally, DNA-dependent RNA polymerase catalyzes the transcription of DNA into RNA using the four ribonucleoside triphosphates as substrates. This chain is DNA-directed RNA polymerase subunit beta, found in Heliobacterium modesticaldum (strain ATCC 51547 / Ice1).